The sequence spans 269 residues: Chymotrypsin-like elastase family member 2A (269 aa).

The N-terminal stretch at 1–16 (MIRALLLSTLVAGALS) is a signal peptide. A propeptide spans 17–28 (CGLPANLPQLPR) (activation peptide). One can recognise a Peptidase S1 domain in the interval 29–267 (VVGGEDARPN…YIDWINSVIA (239 aa)). A disulfide bond links Cys58 and Cys74. Catalysis depends on charge relay system residues His73 and Asp121. Cystine bridges form between Cys155–Cys222, Cys186–Cys202, and Cys212–Cys243. Ser216 acts as the Charge relay system in catalysis.

The protein belongs to the peptidase S1 family. Elastase subfamily. As to quaternary structure, interacts with CPA1. Interacts with SERPINA1. In terms of tissue distribution, pancreas.

The protein localises to the secreted. The enzyme catalyses Preferential cleavage: Leu-|-Xaa, Met-|-Xaa and Phe-|-Xaa. Hydrolyzes elastin.. Functionally, elastase that enhances insulin signaling and might have a physiologic role in cellular glucose metabolism. Circulates in plasma and reduces platelet hyperactivation, triggers both insulin secretion and degradation, and increases insulin sensitivity. In Sus scrofa (Pig), this protein is Chymotrypsin-like elastase family member 2A (CELA2A).